The primary structure comprises 365 residues: PDZ and LIM domain protein 3 (365 aa).

One can recognise a PDZ domain in the interval 1-84; the sequence is MPQNVILPGP…QLCLKIDRAE (84 aa). The residue at position 18 (Ser18) is a Phosphoserine. Residues 126 to 156 form a disordered region; sequence FIIPGRSSGCSTPSGIDGGSGRSTPSSVSTL. A compositionally biased stretch (polar residues) spans 147-156; it reads RSTPSSVSTL. One can recognise an LIM zinc-binding domain in the interval 293-352; it reads PLCDKCGSGIVGAVVKARDKYRHPECFVCADCNLNLKQKGYFFVEGELYCETHARARMRP.

In terms of assembly, interacts with ACTN2. Forms a heterodimer with PDLIM4 (via LIM domain).

Its subcellular location is the cytoplasm. The protein localises to the myofibril. The protein resides in the sarcomere. It is found in the z line. Its function is as follows. May play a role in the organization of actin filament arrays within muscle cells. The polypeptide is PDZ and LIM domain protein 3 (PDLIM3) (Sus scrofa (Pig)).